The following is a 2225-amino-acid chain: Multifunctional protein CAD (2225 aa).

N-acetylalanine is present on Ala2. The interval 2–365 is GATase (Glutamine amidotransferase); that stretch reads AALVLEDGSV…TVREAAAGNI (364 aa). 3 residues coordinate L-glutamine: Ser44, Gly222, and Gly224. Positions 177–363 constitute a Glutamine amidotransferase type-1 domain; it reads RICALDCGLK…LETVREAAAG (187 aa). Cys252 (nucleophile; for GATase activity) is an active-site residue. Residues Leu253, Gln256, Asn294, Gly296, and Phe297 each coordinate L-glutamine. Active-site for GATase activity residues include His336 and Glu338. Residues 366-394 are linker; sequence GGQTVRERLAQRLCPPELPIPGSGLPPPR. The tract at residues 395–933 is CPSase A; that stretch reads KVLILGSGGL…NTHDLDFRAP (539 aa). Residues 395–1455 are CPSase (Carbamoyl-phosphate synthase); that stretch reads KVLILGSGGL…APPLKVHVDC (1061 aa). Thr456 carries the phosphothreonine; by MAPK1 modification. Residues Arg515, Arg555, Gly561, Gly562, Lys592, Glu599, Gly625, Ile626, His627, Gln668, and Glu682 each coordinate ATP. Positions 519–711 constitute an ATP-grasp 1 domain; the sequence is AARMAEIGEH…LAYVAAKLAL (193 aa). Positions 668, 682, and 684 each coordinate Mg(2+). Mn(2+) is bound by residues Gln668, Glu682, and Asn684. The residue at position 747 (Lys747) is an N6-acetyllysine. Positions 934-1455 are CPSase B; the sequence is HVLVLGSGVY…APPLKVHVDC (522 aa). Phosphoserine is present on Ser1038. The ATP-grasp 2 domain maps to 1052–1243; it reads SRLLDTIGIS…LVALATRIIM (192 aa). Residues Arg1088, Lys1127, Ile1129, Glu1134, Gly1159, Val1160, His1161, Ser1162, Gln1202, and Glu1214 each contribute to the ATP site. 3 residues coordinate Mg(2+): Gln1202, Glu1214, and Asn1216. Residues Gln1202, Glu1214, and Asn1216 each coordinate Mn(2+). Residues 1308 to 1462 form the MGS-like domain; that stretch reads FKIPEKNILL…VDCMTSQKLV (155 aa). Ser1406 carries the phosphoserine; by PKA modification. Lys1411 bears the N6-acetyllysine mark. The DHOase (dihydroorotase) stretch occupies residues 1456 to 1788; the sequence is MTSQKLVRLP…VKGTVRRVVL (333 aa). The Zn(2+) site is built by His1471 and His1473. (S)-dihydroorotate contacts are provided by Arg1475 and Asn1505. Positions 1556, 1590, 1613, 1614, and 1637 each coordinate Zn(2+). Position 1556 is an N6-carboxylysine (Lys1556). Arg1661 lines the (S)-dihydroorotate pocket. Asp1686 serves as a coordination point for Zn(2+). The active-site For DHOase activity is the Asp1686. His1690 and Pro1702 together coordinate (S)-dihydroorotate. The interval 1789 to 1917 is linker; sequence RGEVAYIDGQ…GLLHPQMSPL (129 aa). The disordered stretch occupies residues 1815–1885; the sequence is GVVPQPPPST…VVEPELMGTP (71 aa). A compositionally biased stretch (low complexity) spans 1825–1834; sequence PATTEITTTP. Ser1859 bears the Phosphoserine mark. Over residues 1866–1878 the composition is skewed to basic and acidic residues; that stretch reads EEPKEKPPRKVVE. Phosphothreonine is present on Thr1884. Phosphoserine occurs at positions 1900 and 1938. The interval 1918 to 2225 is ATCase (Aspartate transcarbamylase); sequence LHSLVGQHIL…ALLATVLGRF (308 aa). Residues Arg1975 and Thr1976 each contribute to the carbamoyl phosphate site. Lys2003 contacts L-aspartate. Carbamoyl phosphate-binding residues include Arg2024, His2052, and Gln2055. 2 residues coordinate L-aspartate: Arg2085 and Arg2146. Carbamoyl phosphate contacts are provided by Met2185 and Pro2186.

The protein in the N-terminal section; belongs to the CarA family. It in the 2nd section; belongs to the CarB family. This sequence in the 3rd section; belongs to the metallo-dependent hydrolases superfamily. DHOase family. CAD subfamily. In the C-terminal section; belongs to the aspartate/ornithine carbamoyltransferase superfamily. ATCase family. Homohexamer. Interacts with CIPC. Zn(2+) serves as cofactor. Requires Mg(2+) as cofactor. It depends on Mn(2+) as a cofactor. Post-translationally, activated by MAP kinase (Erk1/2) phosphorylation just prior to the S phase of the cell cycle, when the demand for pyrimidine nucleotides is greatest, and down-regulated as the cells emerge from S phase by protein kinase A (PKA) phosphorylation. Phosphorylation at Ser-1859 by RPS6KB1 downstream of MTOR promotes oligomerization and stimulates dihydroorotase activity. Phosphorylation at Ser-1406 reduces sensitivity to feedback inhibition by UTP.

It is found in the cytoplasm. It localises to the nucleus. It catalyses the reaction hydrogencarbonate + L-glutamine + 2 ATP + H2O = carbamoyl phosphate + L-glutamate + 2 ADP + phosphate + 2 H(+). The enzyme catalyses L-glutamine + H2O = L-glutamate + NH4(+). It carries out the reaction hydrogencarbonate + NH4(+) + 2 ATP = carbamoyl phosphate + 2 ADP + phosphate + 2 H(+). The catalysed reaction is carbamoyl phosphate + L-aspartate = N-carbamoyl-L-aspartate + phosphate + H(+). It catalyses the reaction (S)-dihydroorotate + H2O = N-carbamoyl-L-aspartate + H(+). It functions in the pathway pyrimidine metabolism; UMP biosynthesis via de novo pathway; (S)-dihydroorotate from bicarbonate: step 1/3. Its pathway is pyrimidine metabolism; UMP biosynthesis via de novo pathway; (S)-dihydroorotate from bicarbonate: step 2/3. It participates in pyrimidine metabolism; UMP biosynthesis via de novo pathway; (S)-dihydroorotate from bicarbonate: step 3/3. With respect to regulation, allosterically regulated and controlled by phosphorylation. 5-phosphoribose 1-diphosphate (PRPP) is an activator while UMP and UTP are inhibitors of the CPSase reaction. Functionally, multifunctional protein that encodes the first 3 enzymatic activities of the de novo pyrimidine pathway: carbamoylphosphate synthetase (CPSase; EC 6.3.5.5), aspartate transcarbamylase (ATCase; EC 2.1.3.2) and dihydroorotase (DHOase; EC 3.5.2.3). The CPSase-function is accomplished in 2 steps, by a glutamine-dependent amidotransferase activity (GATase) that binds and cleaves glutamine to produce ammonia, followed by an ammonium-dependent carbamoyl phosphate synthetase, which reacts with the ammonia, hydrogencarbonate and ATP to form carbamoyl phosphate. The endogenously produced carbamoyl phosphate is sequestered and channeled to the ATCase active site. ATCase then catalyzes the formation of carbamoyl-L-aspartate from L-aspartate and carbamoyl phosphate. In the last step, DHOase catalyzes the cyclization of carbamoyl aspartate to dihydroorotate. The polypeptide is Multifunctional protein CAD (Cad) (Mus musculus (Mouse)).